The primary structure comprises 496 residues: Putative ammonium transporter 1 member 5 (496 aa).

11 helical membrane-spanning segments follow: residues 50-70 (LLFS…LCAG), 85-105 (VLDA…FAFG), 131-151 (FFLY…GSIA), 156-176 (FVAY…VVSH), 202-222 (FAGS…GALI), 246-266 (LVVL…PGSF), 284-306 (GIGR…TLFG), 314-334 (WNVT…TAGC), 336-356 (VVDP…LIGC), 369-389 (LEAA…VGLF), and 422-442 (LVQI…LFFI). Phosphoserine is present on S485.

This sequence belongs to the ammonia transporter channel (TC 1.A.11.2) family.

It localises to the membrane. Its function is as follows. Involved in ammonium transport. This Arabidopsis thaliana (Mouse-ear cress) protein is Putative ammonium transporter 1 member 5 (AMT1-5).